Here is an 850-residue protein sequence, read N- to C-terminus: Mitogen-activated protein kinase kinase kinase 11 (850 aa).

A Phosphoserine modification is found at S11. Residues 16–35 form a disordered region; sequence WNGSGSGGGGGTGGVRPEGS. Residues 17-31 show a composition bias toward gly residues; that stretch reads NGSGSGGGGGTGGVR. Position 35 is a phosphoserine (S35). In terms of domain architecture, SH3 spans 42 to 106; it reads YANPVWTALF…PSNYVSRGGG (65 aa). One can recognise a Protein kinase domain in the interval 118–380; it reads LRLEEVIGIG…ASILQQLEAL (263 aa). Residues 124–132 and K145 each bind ATP; that span reads IGIGGFGKV. The active-site Proton acceptor is D242. T278 carries the phosphothreonine; by autocatalysis modification. S282 is modified (phosphoserine; by autocatalysis and MAP4K1). The residue at position 395 (S395) is a Phosphoserine. Leucine-zipper regions lie at residues 404–425 and 439–460; these read IQGL…EEEL and LRRR…ELTL. Phosphoserine occurs at positions 508 and 525. Positions 535 to 644 are disordered; it reads QLEPTESGQT…SSGTPKLIQR (110 aa). Positions 538–547 are enriched in polar residues; the sequence is PTESGQTWGR. Phosphoserine is present on residues S549, S556, and S557. Over residues 551 to 563 the composition is skewed to basic and acidic residues; it reads RRLEDSSNGERRA. Residues 598-610 are compositionally biased toward low complexity; that stretch reads SSPLGSPSTPPAL. S655 is modified (phosphoserine). The tract at residues 657–850 is disordered; it reads GLGRDLQPPG…QAPWAPEAGP (194 aa). The span at 677-693 shows a compositional bias: pro residues; the sequence is TAPPPAQMPSPCPPELP. Positions 700–711 are enriched in polar residues; sequence LSQTTPDAHSSP. Phosphoserine is present on S709. Residue T712 is modified to Phosphothreonine. Phosphoserine is present on residues S728, S731, S743, S751, S761, S773, S792, S796, and S818. Low complexity predominate over residues 763-776; it reads PLGLISRPRPSPLR. A compositionally biased stretch (pro residues) spans 790 to 802; the sequence is RPSPLPSPQPAPR. Residues 803–819 show a composition bias toward low complexity; it reads RAPWTLFPDSDPFWDSP.

Belongs to the protein kinase superfamily. STE Ser/Thr protein kinase family. MAP kinase kinase kinase subfamily. Homodimer; undergoes dimerization during activation. Interacts with MAP2K4/MKK4 and MAP2K7/MKK7. Found in a complex with SH3RF1, RAC1, MAP2K7/MKK7, MAPK8IP1/JIP1 and MAPK8/JNK1. Mg(2+) serves as cofactor. Post-translationally, autophosphorylation on serine and threonine residues within the activation loop plays a role in enzyme activation. Thr-278 is likely to be the main autophosphorylation site. Phosphorylation of Ser-556 and Ser-557 is induced by CDC42.

The protein localises to the cytoplasm. It is found in the cytoskeleton. It localises to the microtubule organizing center. The protein resides in the centrosome. It catalyses the reaction L-seryl-[protein] + ATP = O-phospho-L-seryl-[protein] + ADP + H(+). The enzyme catalyses L-threonyl-[protein] + ATP = O-phospho-L-threonyl-[protein] + ADP + H(+). Its activity is regulated as follows. Homodimerization via the leucine zipper domains is required for autophosphorylation and subsequent activation. Activates the JUN N-terminal pathway. Required for serum-stimulated cell proliferation and for mitogen and cytokine activation of MAPK14 (p38), MAPK3 (ERK) and MAPK8 (JNK1) through phosphorylation and activation of MAP2K4/MKK4 and MAP2K7/MKK7. Plays a role in mitogen-stimulated phosphorylation and activation of BRAF, but does not phosphorylate BRAF directly. Influences microtubule organization during the cell cycle. The chain is Mitogen-activated protein kinase kinase kinase 11 (Map3k11) from Mus musculus (Mouse).